The following is a 234-amino-acid chain: UPF0173 metal-dependent hydrolase Smed_0942 (234 aa).

This sequence belongs to the UPF0173 family.

The polypeptide is UPF0173 metal-dependent hydrolase Smed_0942 (Sinorhizobium medicae (strain WSM419) (Ensifer medicae)).